We begin with the raw amino-acid sequence, 211 residues long: MKKIGLFGGTFNPLHNGHLQLAEFAAAQCQLDQVVFLPAASPPHKKGDEIVPFSHRAEMIRLACSRNKRFSCNTIEQDLARPSYTVDTLQALKTSPLYKSEAQFFFLIGVDAFIELKTWKAYRDLLSEINFILCPRKLFSRTQTVLFLTELGFVQTPLGWEHSSYLTLYELEGAPDQVSSTEVRRTFEKSGDLYQKLPPTVADYIMKHGLY.

This sequence belongs to the NadD family.

The catalysed reaction is nicotinate beta-D-ribonucleotide + ATP + H(+) = deamido-NAD(+) + diphosphate. It participates in cofactor biosynthesis; NAD(+) biosynthesis; deamido-NAD(+) from nicotinate D-ribonucleotide: step 1/1. Catalyzes the reversible adenylation of nicotinate mononucleotide (NaMN) to nicotinic acid adenine dinucleotide (NaAD). The sequence is that of Probable nicotinate-nucleotide adenylyltransferase from Desulfotalea psychrophila (strain LSv54 / DSM 12343).